Here is a 588-residue protein sequence, read N- to C-terminus: Glutathione/L-cysteine transport system ATP-binding/permease protein CydD (588 aa).

Residues 1–15 are Cytoplasmic-facing; sequence MNKSRQKELTRWLKQ. The next 2 helical transmembrane spans lie at 16 to 36 and 37 to 57; these read QSVISQRWLNISRLLGFVSGI and LIIAQAWFMARILQHMIMENI. The 287-residue stretch at 20-306 folds into the ABC transmembrane type-1 domain; that stretch reads SQRWLNISRL…APEFFQPLRD (287 aa). Residues 58–136 lie on the Cytoplasmic side of the membrane; the sequence is PREALLLPFT…LEQIDDMHDY (79 aa). Residues 137-157 form a helical membrane-spanning segment; that stretch reads YARYLPQMALAVSVPLLIVVA. At 158–161 the chain is on the periplasmic side; the sequence is IFPS. A helical membrane pass occupies residues 162 to 182; it reads NWAAALILLGTAPLIPLFMAL. The Cytoplasmic portion of the chain corresponds to 183–249; the sequence is VGMGAADANR…MEVLRLAFLS (67 aa). The helical transmembrane segment at 250–270 threads the bilayer; the sequence is SGILEFFTSLSIALVAVYFGF. At 271 to 276 the chain is on the periplasmic side; it reads SYLGEL. Residues 277-297 form a helical membrane-spanning segment; that stretch reads DFGHYDTGVTLAAGFLALILA. Over 298-573 the chain is Cytoplasmic; it reads PEFFQPLRDL…QGRYAELSVA (276 aa). The ABC transporter domain maps to 339–572; it reads EAELASTDPV…EQGRYAELSV (234 aa). An ATP-binding site is contributed by 373 to 380; that stretch reads LPAGQRAV.

It belongs to the ABC transporter superfamily. Cysteine exporter (TC 3.A.1.129.1) family. Forms a heterodimer with CydC.

It is found in the cell inner membrane. It carries out the reaction L-cysteine(in) + ATP + H2O = L-cysteine(out) + ADP + phosphate + H(+). The catalysed reaction is glutathione(in) + ATP + H2O = glutathione(out) + ADP + phosphate + H(+). Its activity is regulated as follows. ATPase activity is stimulated by various thiol compounds. The presence of heme leads to a further enhancement of thiol-stimulated ATPase activity, although a large excess of heme inhibits activity. Glutathione transport is inhibited by sodium orthovanadate, an inhibitor of ABC-type transport systems, but not by the proton ionophore carbonyl cyanide m-chlorophenylhydrazone (CCCP). In terms of biological role, part of the ABC transporter complex CydDC that exports the reduced low-molecular-weight thiols cysteine and glutathione to the periplasm. Export of these thiol-containing redox-active molecules may be crucial for redox homeostasis in the periplasm, permitting correct assembly of various respiratory complexes and formation of correct disulfide bonds in periplasmic and secreted proteins. CydD contains transmembrane domains (TMD), which form a pore in the inner membrane, and an ATP-binding domain (NBD), which is responsible for energy generation. Required for the assembly of functional cytochrome bd-type quinol oxidases and periplasmic c-type cytochromes. Overexpression of CydDC under anaerobic conditions also results in the formation of a heme biosynthesis-derived pigment, P-574. CydDC binds heme b, but heme is probably not transported by the complex and instead has a role in regulating ATPase activity. Functionally, conversely, a more recent study suggests an alternative function of CydDC: authors suggest that CydDC does not mediate the export of L-cysteine but rather reduces cytoplasmic L-cystine to L-cysteine. The principle function of CydDC would be to maintain the reduced state of cytoplasmic L-cysteine, thereby providing an important connection between sulfur metabolism, oxidative stress and resistance to antibiotics. This chain is Glutathione/L-cysteine transport system ATP-binding/permease protein CydD, found in Escherichia coli (strain K12).